The primary structure comprises 187 residues: Large ribosomal subunit protein uL5 (187 aa).

It belongs to the universal ribosomal protein uL5 family. As to quaternary structure, part of the 50S ribosomal subunit; part of the 5S rRNA/L5/L18/L25 subcomplex. Contacts the 5S rRNA and the P site tRNA. Forms a bridge to the 30S subunit in the 70S ribosome.

Functionally, this is one of the proteins that bind and probably mediate the attachment of the 5S RNA into the large ribosomal subunit, where it forms part of the central protuberance. In the 70S ribosome it contacts protein S13 of the 30S subunit (bridge B1b), connecting the 2 subunits; this bridge is implicated in subunit movement. Contacts the P site tRNA; the 5S rRNA and some of its associated proteins might help stabilize positioning of ribosome-bound tRNAs. The sequence is that of Large ribosomal subunit protein uL5 from Saccharopolyspora erythraea (strain ATCC 11635 / DSM 40517 / JCM 4748 / NBRC 13426 / NCIMB 8594 / NRRL 2338).